Here is a 398-residue protein sequence, read N- to C-terminus: Tyrosine--tRNA ligase (398 aa).

The 'HIGH' region motif lies at 42-51 (PTAPDLHLGH). The 'KMSKS' region motif lies at 226–230 (KMSKS). An ATP-binding site is contributed by K229. The region spanning 341–397 (AFLEAAGLVKSRGEAKRLIKEGALSVDGVRCDDANSPLASGEYVIKLGKKRFLRLTV) is the S4 RNA-binding domain.

This sequence belongs to the class-I aminoacyl-tRNA synthetase family. TyrS type 2 subfamily. In terms of assembly, homodimer.

The protein localises to the cytoplasm. The catalysed reaction is tRNA(Tyr) + L-tyrosine + ATP = L-tyrosyl-tRNA(Tyr) + AMP + diphosphate + H(+). Catalyzes the attachment of tyrosine to tRNA(Tyr) in a two-step reaction: tyrosine is first activated by ATP to form Tyr-AMP and then transferred to the acceptor end of tRNA(Tyr). This chain is Tyrosine--tRNA ligase, found in Nitratidesulfovibrio vulgaris (strain ATCC 29579 / DSM 644 / CCUG 34227 / NCIMB 8303 / VKM B-1760 / Hildenborough) (Desulfovibrio vulgaris).